We begin with the raw amino-acid sequence, 153 residues long: SsrA-binding protein (153 aa).

The interval 129 to 153 (KREDMKKKDQSREMAQALREKSKSH) is disordered.

This sequence belongs to the SmpB family.

The protein resides in the cytoplasm. Its function is as follows. Required for rescue of stalled ribosomes mediated by trans-translation. Binds to transfer-messenger RNA (tmRNA), required for stable association of tmRNA with ribosomes. tmRNA and SmpB together mimic tRNA shape, replacing the anticodon stem-loop with SmpB. tmRNA is encoded by the ssrA gene; the 2 termini fold to resemble tRNA(Ala) and it encodes a 'tag peptide', a short internal open reading frame. During trans-translation Ala-aminoacylated tmRNA acts like a tRNA, entering the A-site of stalled ribosomes, displacing the stalled mRNA. The ribosome then switches to translate the ORF on the tmRNA; the nascent peptide is terminated with the 'tag peptide' encoded by the tmRNA and targeted for degradation. The ribosome is freed to recommence translation, which seems to be the essential function of trans-translation. The chain is SsrA-binding protein from Geobacter sulfurreducens (strain ATCC 51573 / DSM 12127 / PCA).